Consider the following 126-residue polypeptide: Fluoride-specific ion channel FluC (126 aa).

4 helical membrane-spanning segments follow: residues 3-23 (MILAVAAGGGLGAVARYLTGV), 39-59 (TVNVTGSFAMGVLAGLGAHVW), 71-91 (VGVLGGFTTFSSFSLDVALLV), and 101-121 (AYVAASFLLSVGGLFAGLALI). Na(+)-binding residues include glycine 75 and threonine 78.

Belongs to the fluoride channel Fluc/FEX (TC 1.A.43) family.

Its subcellular location is the cell inner membrane. It catalyses the reaction fluoride(in) = fluoride(out). Na(+) is not transported, but it plays an essential structural role and its presence is essential for fluoride channel function. Fluoride-specific ion channel. Important for reducing fluoride concentration in the cell, thus reducing its toxicity. This chain is Fluoride-specific ion channel FluC, found in Rhodospirillum centenum (strain ATCC 51521 / SW).